The primary structure comprises 269 residues: ATP synthase subunit delta (269 aa).

This sequence belongs to the ATPase delta chain family. As to quaternary structure, F-type ATPases have 2 components, F(1) - the catalytic core - and F(0) - the membrane proton channel. F(1) has five subunits: alpha(3), beta(3), gamma(1), delta(1), epsilon(1). F(0) has three main subunits: a(1), b(2) and c(10-14). The alpha and beta chains form an alternating ring which encloses part of the gamma chain. F(1) is attached to F(0) by a central stalk formed by the gamma and epsilon chains, while a peripheral stalk is formed by the delta and b chains.

The protein localises to the cell membrane. F(1)F(0) ATP synthase produces ATP from ADP in the presence of a proton or sodium gradient. F-type ATPases consist of two structural domains, F(1) containing the extramembraneous catalytic core and F(0) containing the membrane proton channel, linked together by a central stalk and a peripheral stalk. During catalysis, ATP synthesis in the catalytic domain of F(1) is coupled via a rotary mechanism of the central stalk subunits to proton translocation. In terms of biological role, this protein is part of the stalk that links CF(0) to CF(1). It either transmits conformational changes from CF(0) to CF(1) or is implicated in proton conduction. The polypeptide is ATP synthase subunit delta (Nocardia farcinica (strain IFM 10152)).